The primary structure comprises 475 residues: MNKFDEFIESNEKDLDVDTSTRNSIISMSPVRKTGRKIRSASSNGYRLEHHRTSSAGSMHSQRLMTPTRLNDQDHPLQAKPDARRVVTRHSSVSVPNAMSKRRSLIQPMVVPTTPESQNNLPSVSHSEGSYGIPLESTTVLSSEQAMASGLRRSRNGSSQSVNSMIATTIPTNGVDVSALLQSLATKELELLECKQKIEDLKKQTQHEEQNYTRRARELHELKEQVSKHLDPSLNTPVKNRAFSPVYQNIPLESRTENAGNSSLPSSVSKPKNMGHQSTNQSRSVSPQDIQERRQRDDSSDSSKQSLWSKPLALFNQFDKIIQHEIERTLNWDDSLSGTPEVQEGTPTSNSESSAQQYDNEAPGARQKSPSQGSVSRSLWSFVSDVKAGLLGIEEENDNDVITDNRCDPVYKSDRQHEQKKSTHKITNRGQAEDSGDDSSLNTRKFKTTTKFQKDNAGNNSLTDESGHRTREKKK.

The tract at residues 32-62 is disordered; that stretch reads RKTGRKIRSASSNGYRLEHHRTSSAGSMHSQ. Positions 179–231 form a coiled coil; the sequence is ALLQSLATKELELLECKQKIEDLKKQTQHEEQNYTRRARELHELKEQVSKHLD. Residue Thr236 is modified to Phosphothreonine. Ser244 and Ser286 each carry phosphoserine. Disordered stretches follow at residues 252-306, 332-377, and 400-475; these read LESR…SKQS, WDDS…SVSR, and DVIT…EKKK. Residues 257 to 287 show a composition bias toward polar residues; that stretch reads ENAGNSSLPSSVSKPKNMGHQSTNQSRSVSP. Basic and acidic residues predominate over residues 290-301; it reads IQERRQRDDSSD. Composition is skewed to polar residues over residues 332–359 and 368–377; these read WDDS…QQYD and KSPSQGSVSR. The segment covering 403 to 421 has biased composition (basic and acidic residues); the sequence is TDNRCDPVYKSDRQHEQKK.

The protein belongs to the TDA11 family.

The protein localises to the cytoplasm. This Saccharomyces cerevisiae (strain Lalvin QA23) (Baker's yeast) protein is Topoisomerase I damage affected protein 11 (TDA11).